Here is a 469-residue protein sequence, read N- to C-terminus: Uronate isomerase (469 aa).

Belongs to the metallo-dependent hydrolases superfamily. Uronate isomerase family.

It carries out the reaction D-glucuronate = D-fructuronate. The enzyme catalyses aldehydo-D-galacturonate = keto-D-tagaturonate. It functions in the pathway carbohydrate metabolism; pentose and glucuronate interconversion. The polypeptide is Uronate isomerase (Pectobacterium atrosepticum (strain SCRI 1043 / ATCC BAA-672) (Erwinia carotovora subsp. atroseptica)).